Consider the following 93-residue polypeptide: Cobalt transport protein CbiN (93 aa).

The next 2 membrane-spanning stretches (helical) occupy residues 5–25 (LMLLAMVVALVILPFFINHGG) and 63–83 (LLFTLQGSLGAAVIFYILGYC).

It belongs to the CbiN family. Forms an energy-coupling factor (ECF) transporter complex composed of an ATP-binding protein (A component, CbiO), a transmembrane protein (T component, CbiQ) and 2 possible substrate-capture proteins (S components, CbiM and CbiN) of unknown stoichimetry.

The protein localises to the cell inner membrane. Its pathway is cofactor biosynthesis; adenosylcobalamin biosynthesis. Part of the energy-coupling factor (ECF) transporter complex CbiMNOQ involved in cobalt import. This Salmonella arizonae (strain ATCC BAA-731 / CDC346-86 / RSK2980) protein is Cobalt transport protein CbiN.